Reading from the N-terminus, the 244-residue chain is tRNA (guanine-N(7)-)-methyltransferase (244 aa).

Residues 1-10 (MSDTPQSPAQ) are compositionally biased toward polar residues. The disordered stretch occupies residues 1–20 (MSDTPQSPAQDSLAEHDEAR). S-adenosyl-L-methionine is bound by residues E74, E99, D126, and D149. Residue D149 is part of the active site. Substrate is bound by residues K153, D185, and 222 to 225 (TKFE).

Belongs to the class I-like SAM-binding methyltransferase superfamily. TrmB family.

The catalysed reaction is guanosine(46) in tRNA + S-adenosyl-L-methionine = N(7)-methylguanosine(46) in tRNA + S-adenosyl-L-homocysteine. The protein operates within tRNA modification; N(7)-methylguanine-tRNA biosynthesis. In terms of biological role, catalyzes the formation of N(7)-methylguanine at position 46 (m7G46) in tRNA. The chain is tRNA (guanine-N(7)-)-methyltransferase from Pseudomonas paraeruginosa (strain DSM 24068 / PA7) (Pseudomonas aeruginosa (strain PA7)).